The primary structure comprises 195 residues: Large ribosomal subunit protein bL25 (195 aa).

The protein belongs to the bacterial ribosomal protein bL25 family. CTC subfamily. In terms of assembly, part of the 50S ribosomal subunit; part of the 5S rRNA/L5/L18/L25 subcomplex. Contacts the 5S rRNA. Binds to the 5S rRNA independently of L5 and L18.

This is one of the proteins that binds to the 5S RNA in the ribosome where it forms part of the central protuberance. The sequence is that of Large ribosomal subunit protein bL25 from Geobacter metallireducens (strain ATCC 53774 / DSM 7210 / GS-15).